A 208-amino-acid polypeptide reads, in one-letter code: Ribosomal RNA large subunit methyltransferase E (208 aa).

Residues Gly-62, Trp-64, Asp-82, Asp-98, and Asp-123 each coordinate S-adenosyl-L-methionine. Lys-163 serves as the catalytic Proton acceptor.

The protein belongs to the class I-like SAM-binding methyltransferase superfamily. RNA methyltransferase RlmE family.

It localises to the cytoplasm. It carries out the reaction uridine(2552) in 23S rRNA + S-adenosyl-L-methionine = 2'-O-methyluridine(2552) in 23S rRNA + S-adenosyl-L-homocysteine + H(+). Its function is as follows. Specifically methylates the uridine in position 2552 of 23S rRNA at the 2'-O position of the ribose in the fully assembled 50S ribosomal subunit. This chain is Ribosomal RNA large subunit methyltransferase E, found in Haemophilus ducreyi (strain 35000HP / ATCC 700724).